Reading from the N-terminus, the 469-residue chain is UDP-N-acetylmuramoylalanine--D-glutamate ligase (469 aa).

125–131 lines the ATP pocket; it reads GTNGKTT.

The protein belongs to the MurCDEF family.

It localises to the cytoplasm. It catalyses the reaction UDP-N-acetyl-alpha-D-muramoyl-L-alanine + D-glutamate + ATP = UDP-N-acetyl-alpha-D-muramoyl-L-alanyl-D-glutamate + ADP + phosphate + H(+). It functions in the pathway cell wall biogenesis; peptidoglycan biosynthesis. In terms of biological role, cell wall formation. Catalyzes the addition of glutamate to the nucleotide precursor UDP-N-acetylmuramoyl-L-alanine (UMA). The protein is UDP-N-acetylmuramoylalanine--D-glutamate ligase of Prochlorococcus marinus (strain NATL2A).